The sequence spans 411 residues: D-galactonate dehydratase family member SBI_01856 (411 aa).

Residues Asn45 and His130 each contribute to the substrate site. Tyr167 serves as the catalytic Proton donor/acceptor. Residue Asp219 coordinates Mg(2+). The Proton donor/acceptor role is filled by His221. The Mg(2+) site is built by Glu245 and Glu271. Glu271, Arg292, His321, Asp325, and Glu348 together coordinate substrate.

The protein belongs to the mandelate racemase/muconate lactonizing enzyme family. GalD subfamily. Mg(2+) is required as a cofactor.

It catalyses the reaction D-gluconate = 2-dehydro-3-deoxy-D-gluconate + H2O. Functionally, has low D-gluconate dehydratase activity (in vitro), suggesting that it has no significant role in D-gluconate degradation in vivo. Has no detectable activity with a panel of 70 other acid sugars (in vitro). The protein is D-galactonate dehydratase family member SBI_01856 of Streptomyces bingchenggensis (strain BCW-1).